The chain runs to 103 residues: Large ribosomal subunit protein bL21 (103 aa).

The protein belongs to the bacterial ribosomal protein bL21 family. As to quaternary structure, part of the 50S ribosomal subunit. Contacts protein L20.

In terms of biological role, this protein binds to 23S rRNA in the presence of protein L20. This Delftia acidovorans (strain DSM 14801 / SPH-1) protein is Large ribosomal subunit protein bL21.